A 1065-amino-acid polypeptide reads, in one-letter code: Isoleucine--tRNA ligase (1065 aa).

The 'HIGH' region motif lies at 49–59 (PYVSGAIHLGT). The short motif at 625–629 (KMSKS) is the 'KMSKS' region element. Residue K628 coordinates ATP.

This sequence belongs to the class-I aminoacyl-tRNA synthetase family. IleS type 2 subfamily. In terms of assembly, monomer. Zn(2+) is required as a cofactor.

It localises to the cytoplasm. The catalysed reaction is tRNA(Ile) + L-isoleucine + ATP = L-isoleucyl-tRNA(Ile) + AMP + diphosphate. Functionally, catalyzes the attachment of isoleucine to tRNA(Ile). As IleRS can inadvertently accommodate and process structurally similar amino acids such as valine, to avoid such errors it has two additional distinct tRNA(Ile)-dependent editing activities. One activity is designated as 'pretransfer' editing and involves the hydrolysis of activated Val-AMP. The other activity is designated 'posttransfer' editing and involves deacylation of mischarged Val-tRNA(Ile). This is Isoleucine--tRNA ligase from Thermococcus kodakarensis (strain ATCC BAA-918 / JCM 12380 / KOD1) (Pyrococcus kodakaraensis (strain KOD1)).